The sequence spans 484 residues: Bifunctional protein GlmU (484 aa).

The segment at 1–240 is pyrophosphorylase; that stretch reads MSNPHSSAVI…HRELAGVNDR (240 aa). UDP-N-acetyl-alpha-D-glucosamine contacts are provided by residues 12–15, K26, Q83, and 88–89; these read LAAG and GT. A Mg(2+)-binding site is contributed by D113. Residues G150, E165, N180, and N238 each contribute to the UDP-N-acetyl-alpha-D-glucosamine site. A Mg(2+)-binding site is contributed by N238. Positions 241–261 are linker; sequence VQLAQAGKILNQRLVEDAMRN. The segment at 262–484 is N-acetyltransferase; sequence GATIVDPDTT…QAHAHETKEG (223 aa). UDP-N-acetyl-alpha-D-glucosamine is bound by residues R343 and K361. The Proton acceptor role is filled by H373. The UDP-N-acetyl-alpha-D-glucosamine site is built by Y376 and N387. Acetyl-CoA contacts are provided by residues A390, 396–397, S415, and A433; that span reads NY. The segment at 461–484 is disordered; it reads EKNRPGTPAADAARQAHAHETKEG.

The protein in the N-terminal section; belongs to the N-acetylglucosamine-1-phosphate uridyltransferase family. It in the C-terminal section; belongs to the transferase hexapeptide repeat family. Homotrimer. Requires Mg(2+) as cofactor.

The protein resides in the cytoplasm. It catalyses the reaction alpha-D-glucosamine 1-phosphate + acetyl-CoA = N-acetyl-alpha-D-glucosamine 1-phosphate + CoA + H(+). The enzyme catalyses N-acetyl-alpha-D-glucosamine 1-phosphate + UTP + H(+) = UDP-N-acetyl-alpha-D-glucosamine + diphosphate. The protein operates within nucleotide-sugar biosynthesis; UDP-N-acetyl-alpha-D-glucosamine biosynthesis; N-acetyl-alpha-D-glucosamine 1-phosphate from alpha-D-glucosamine 6-phosphate (route II): step 2/2. It functions in the pathway nucleotide-sugar biosynthesis; UDP-N-acetyl-alpha-D-glucosamine biosynthesis; UDP-N-acetyl-alpha-D-glucosamine from N-acetyl-alpha-D-glucosamine 1-phosphate: step 1/1. It participates in bacterial outer membrane biogenesis; LPS lipid A biosynthesis. Functionally, catalyzes the last two sequential reactions in the de novo biosynthetic pathway for UDP-N-acetylglucosamine (UDP-GlcNAc). The C-terminal domain catalyzes the transfer of acetyl group from acetyl coenzyme A to glucosamine-1-phosphate (GlcN-1-P) to produce N-acetylglucosamine-1-phosphate (GlcNAc-1-P), which is converted into UDP-GlcNAc by the transfer of uridine 5-monophosphate (from uridine 5-triphosphate), a reaction catalyzed by the N-terminal domain. The protein is Bifunctional protein GlmU of Corynebacterium diphtheriae (strain ATCC 700971 / NCTC 13129 / Biotype gravis).